An 865-amino-acid polypeptide reads, in one-letter code: Protein translocase subunit SecA (865 aa).

Residues Gln93, Gly111–Thr115, and Asp501 each bind ATP. Cys841, Cys843, Cys852, and Cys853 together coordinate Zn(2+).

The protein belongs to the SecA family. As to quaternary structure, monomer and homodimer. Part of the essential Sec protein translocation apparatus which comprises SecA, SecYEG and auxiliary proteins SecDF-YajC and YidC. Zn(2+) serves as cofactor.

The protein resides in the cell inner membrane. It is found in the cytoplasm. The enzyme catalyses ATP + H2O + cellular proteinSide 1 = ADP + phosphate + cellular proteinSide 2.. Functionally, part of the Sec protein translocase complex. Interacts with the SecYEG preprotein conducting channel. Has a central role in coupling the hydrolysis of ATP to the transfer of proteins into and across the cell membrane, serving as an ATP-driven molecular motor driving the stepwise translocation of polypeptide chains across the membrane. In Helicobacter pylori (strain G27), this protein is Protein translocase subunit SecA.